Reading from the N-terminus, the 115-residue chain is DNA-binding protein PYRAB09250 (115 aa).

The protein belongs to the PDCD5 family.

The polypeptide is DNA-binding protein PYRAB09250 (Pyrococcus abyssi (strain GE5 / Orsay)).